A 125-amino-acid chain; its full sequence is Small ribosomal subunit protein bS6 (125 aa).

Residues 94–125 form a disordered region; that stretch reads KAETGASSMMKTVEREEARKASQAEFAASNER. Basic and acidic residues predominate over residues 105-115; the sequence is TVEREEARKAS.

It belongs to the bacterial ribosomal protein bS6 family.

Functionally, binds together with bS18 to 16S ribosomal RNA. This is Small ribosomal subunit protein bS6 from Acidovorax ebreus (strain TPSY) (Diaphorobacter sp. (strain TPSY)).